The chain runs to 440 residues: uncharacterized protein (440 aa).

Disordered regions lie at residues 49-81 (CPPA…EPSL) and 162-295 (LPKP…CASE). Residues 55 to 80 (HGHSSLRTNLNSSPPRCPQNPGTEPS) show a composition bias toward polar residues. Basic and acidic residues predominate over residues 249–266 (YREELSNTKSRFSEDKGS). Positions 274–284 (SSNSSEPGLPG) are enriched in low complexity.

This sequence belongs to the tymoviridae protein p69 family.

This is an uncharacterized protein from Erysimum latent virus (ELV).